A 302-amino-acid polypeptide reads, in one-letter code: MGAMDVQLESTAVQHGQAKINVEEHALVSLLSDEKYATEKTEDVDPDDYEKLEEGIMQYGCAHYRRRCRIRAPCCNEIFDCRHCHNETKNSIKIDAVKRHELPRHEVQQVICSLCGTEQEVRQVCISCGVCMGKYFCEVCKLFDDDVSKQQYHCNGCGICRIGGKENFFHCSKCGCCYSIVLKNSHACVEGAMHHDCPICFEYLFESTNDVSVLPCGHTIHVKCLREMEEHCQFACPLCSKSVCDMSKAWERLDEELATISDTCDNKMVRILCNDCGATSEVQFHLIAHKCQKCKSYNTRQI.

The CHY-type zinc finger occupies 54-130 (EGIMQYGCAH…VRQVCISCGV (77 aa)). Cys-61, His-63, Cys-74, Cys-75, Cys-81, Cys-84, His-85, His-100, Cys-112, Cys-115, Cys-125, Cys-128, Cys-137, Cys-140, His-153, Cys-154, Cys-157, Cys-160, His-170, Cys-171, Cys-174, Cys-177, His-186, and Cys-188 together coordinate Zn(2+). Residues 132 to 196 (MGKYFCEVCK…ACVEGAMHHD (65 aa)) form a CTCHY-type zinc finger. An RING-type; atypical zinc finger spans residues 197-240 (CPICFEYLFESTNDVSVLPCGHTIHVKCLREMEEHCQFACPLCS).

It localises to the nucleus. It carries out the reaction S-ubiquitinyl-[E2 ubiquitin-conjugating enzyme]-L-cysteine + [acceptor protein]-L-lysine = [E2 ubiquitin-conjugating enzyme]-L-cysteine + N(6)-ubiquitinyl-[acceptor protein]-L-lysine.. It participates in protein modification; protein ubiquitination. In terms of biological role, possesses transactivation activity in yeast cells. Involved in the regulation of stomatal aperture. May modulate the expression of genes that control stomata opening during heat shock or drought stress. The sequence is that of Probable E3 ubiquitin-protein ligase RZFP34 from Oryza sativa subsp. japonica (Rice).